A 289-amino-acid polypeptide reads, in one-letter code: RNA-binding protein CP31B, chloroplastic (289 aa).

A chloroplast-targeting transit peptide spans 1-71 (MTSSVLTPSL…NSSPVVTFVS (71 aa)). RRM domains are found at residues 113 to 191 (AKLF…RAAP) and 207 to 285 (FRIY…VAEE).

In terms of processing, ADP-ribosylated by the Pseudomonas syringae type III effector HopU1. ADP-ribosylation reduces the ability of the protein to bind RNA.

Its subcellular location is the plastid. The protein resides in the chloroplast. Its function is as follows. Required for specific RNA editing events in chloroplasts and stabilizes specific chloroplast mRNAs. This Arabidopsis thaliana (Mouse-ear cress) protein is RNA-binding protein CP31B, chloroplastic.